A 289-amino-acid polypeptide reads, in one-letter code: Trihelix transcription factor GT-3b (289 aa).

One can recognise a Myb-like domain in the interval 42-98 (WSVEETKELIGIRGELDQTFMETKRNKLLWEVISNKMRDKSFPRSPEQCKCKWKNLV). The Bipartite nuclear localization signal signature appears at 65 to 81 (KRNKLLWEVISNKMRDK). The interval 137–200 (ESEGGGGGTS…SNSSNSNNGV (64 aa)) is disordered. The span at 156–168 (SDEEEENVNEELV) shows a compositional bias: acidic residues. Residues 179 to 188 (PKKNIAKKRK) carry the Nuclear localization signal motif. Low complexity predominate over residues 190–199 (GSNSSNSNNG). Positions 223–275 (EAREKERAEKEEEWRRKMEELEKERLAMERMWRDREEQRRSREEMRAEKRDSL) form a coiled coil.

In terms of assembly, heterodimer with GT-3A. Associated with the mediator complex.

The protein resides in the nucleus. In terms of biological role, probable transcription factor that may play a role in the induction of CAM4 in response to pathogen and salt. The protein is Trihelix transcription factor GT-3b (GT-3B) of Arabidopsis thaliana (Mouse-ear cress).